The following is a 349-amino-acid chain: 4-hydroxythreonine-4-phosphate dehydrogenase (349 aa).

Positions 141 and 142 each coordinate substrate. 3 residues coordinate a divalent metal cation: histidine 176, histidine 221, and histidine 276. Substrate-binding residues include lysine 284, asparagine 293, and arginine 302.

It belongs to the PdxA family. Homodimer. Zn(2+) serves as cofactor. It depends on Mg(2+) as a cofactor. Requires Co(2+) as cofactor.

The protein resides in the cytoplasm. The enzyme catalyses 4-(phosphooxy)-L-threonine + NAD(+) = 3-amino-2-oxopropyl phosphate + CO2 + NADH. It functions in the pathway cofactor biosynthesis; pyridoxine 5'-phosphate biosynthesis; pyridoxine 5'-phosphate from D-erythrose 4-phosphate: step 4/5. Its function is as follows. Catalyzes the NAD(P)-dependent oxidation of 4-(phosphooxy)-L-threonine (HTP) into 2-amino-3-oxo-4-(phosphooxy)butyric acid which spontaneously decarboxylates to form 3-amino-2-oxopropyl phosphate (AHAP). The sequence is that of 4-hydroxythreonine-4-phosphate dehydrogenase from Methylorubrum populi (strain ATCC BAA-705 / NCIMB 13946 / BJ001) (Methylobacterium populi).